A 353-amino-acid polypeptide reads, in one-letter code: H(2)-forming methylenetetrahydromethanopterin dehydrogenase-related protein MJ1338 (353 aa).

Belongs to the HMD family.

This is H(2)-forming methylenetetrahydromethanopterin dehydrogenase-related protein MJ1338 from Methanocaldococcus jannaschii (strain ATCC 43067 / DSM 2661 / JAL-1 / JCM 10045 / NBRC 100440) (Methanococcus jannaschii).